The sequence spans 149 residues: Ribosome-binding factor A (149 aa).

A compositionally biased stretch (basic and acidic residues) spans 116–125 (TLFEELHPNP). The tract at residues 116–149 (TLFEELHPNPEEDDGDTDAETLLEDSESGIERET) is disordered. Over residues 126–143 (EEDDGDTDAETLLEDSES) the composition is skewed to acidic residues.

This sequence belongs to the RbfA family. Monomer. Binds 30S ribosomal subunits, but not 50S ribosomal subunits or 70S ribosomes.

It is found in the cytoplasm. Its function is as follows. One of several proteins that assist in the late maturation steps of the functional core of the 30S ribosomal subunit. Associates with free 30S ribosomal subunits (but not with 30S subunits that are part of 70S ribosomes or polysomes). Required for efficient processing of 16S rRNA. May interact with the 5'-terminal helix region of 16S rRNA. The protein is Ribosome-binding factor A of Leptospira biflexa serovar Patoc (strain Patoc 1 / Ames).